Here is a 503-residue protein sequence, read N- to C-terminus: MSAALRFDNIGKVFPGVRALDGISFDVHAGEVHGLMGENGAGKSTLLKILGGEYQPDAGSVLVDGQPVQFASAAASIAAGIAVIHQELQYVPDLTVAENLLLGRLPNAFGWVRKREAKRYVRERLAAMGVDLDPDAKLGRLSIAQRQMVEICKALMRNARVIALDEPTSSLSHRETEVLFKLVDDLRAQGRALIYISHRMDEIYRLCNACTIFRDGRKIASHESLADVPRERLVAEMVGREISDIYHYAPRALGDVRFAAEGIDGPALREPASFSVRAGEIVGFFGLVGAGRSELMRLVYGADHRRAGVLTLDGARIDVKRTGDAIRHGIVLCPEDRKEEGIIAIASVAENINISCRRHSLRAGLFINRKAESETADRFIQRLKIKTPNRRQKIRFLSGGNQQKAILSRWLAEPDLKVVILDEPTRGIDVGAKHEIYDVIYRLAERGCAIVMVSSELPEVLGVSDRIVVMREGRIAGELPREQANEHAVLSLALPQTSAVEAA.

2 consecutive ABC transporter domains span residues 5–240 (LRFD…MVGR) and 251–497 (RALG…LPQT). Position 37-44 (37-44 (GENGAGKS)) interacts with ATP.

The protein belongs to the ABC transporter superfamily. Arabinose importer (TC 3.A.1.2.2) family. As to quaternary structure, the complex is composed of two ATP-binding proteins (AraG), two transmembrane proteins (AraH) and a solute-binding protein (AraF).

The protein resides in the cell inner membrane. It carries out the reaction L-arabinose(out) + ATP + H2O = L-arabinose(in) + ADP + phosphate + H(+). Functionally, part of the ABC transporter complex AraFGH involved in arabinose import. Responsible for energy coupling to the transport system. The protein is Arabinose import ATP-binding protein AraG 1 of Burkholderia lata (strain ATCC 17760 / DSM 23089 / LMG 22485 / NCIMB 9086 / R18194 / 383).